Consider the following 335-residue polypeptide: Proline racemase (335 aa).

Cys-91 (proton acceptor) is an active-site residue. The Proton donor role is filled by Cys-256.

The protein belongs to the proline racemase family.

It carries out the reaction L-proline = D-proline. With respect to regulation, inhibited by pyrrole-2-carboxylate in vitro. Catalyzes the reversible interconversion of L- and D-proline. Likely functions as the proline racemase necessary for D-proline generation in order to discriminate it from the L-proline used for protein synthesis. In Acetoanaerobium sticklandii (strain ATCC 12662 / DSM 519 / JCM 1433 / CCUG 9281 / NCIMB 10654 / HF) (Clostridium sticklandii), this protein is Proline racemase.